A 396-amino-acid polypeptide reads, in one-letter code: Elongation factor Tu 1 (396 aa).

Residues 10–206 enclose the tr-type G domain; the sequence is KPHVNVGTIG…TLDTYIPEPE (197 aa). The tract at residues 19–26 is G1; sequence GHVDHGKT. A GTP-binding site is contributed by 19 to 26; it reads GHVDHGKT. Thr-26 contributes to the Mg(2+) binding site. Residues 60 to 64 are G2; the sequence is GITIN. The tract at residues 81–84 is G3; it reads DCPG. Residues 81-85 and 136-139 each bind GTP; these read DCPGH and NKCD. The tract at residues 136 to 139 is G4; the sequence is NKCD. Residues 174–176 are G5; it reads SAL.

It belongs to the TRAFAC class translation factor GTPase superfamily. Classic translation factor GTPase family. EF-Tu/EF-1A subfamily. In terms of assembly, monomer.

It is found in the cytoplasm. It catalyses the reaction GTP + H2O = GDP + phosphate + H(+). GTP hydrolase that promotes the GTP-dependent binding of aminoacyl-tRNA to the A-site of ribosomes during protein biosynthesis. This is Elongation factor Tu 1 from Psychrobacter sp. (strain PRwf-1).